A 102-amino-acid polypeptide reads, in one-letter code: Large ribosomal subunit protein bL21 (102 aa).

It belongs to the bacterial ribosomal protein bL21 family. In terms of assembly, part of the 50S ribosomal subunit. Contacts protein L20.

This protein binds to 23S rRNA in the presence of protein L20. The polypeptide is Large ribosomal subunit protein bL21 (Campylobacter lari (strain RM2100 / D67 / ATCC BAA-1060)).